Reading from the N-terminus, the 214-residue chain is Small ribosomal subunit protein uS5 (214 aa).

One can recognise an S5 DRBM domain in the interval 55–118 (LKYERLDVGI…RNAKLNITPV (64 aa)).

Belongs to the universal ribosomal protein uS5 family. As to quaternary structure, part of the 30S ribosomal subunit. Contacts protein S4.

Functionally, with S4 and S12 plays an important role in translational accuracy. In Staphylothermus marinus (strain ATCC 43588 / DSM 3639 / JCM 9404 / F1), this protein is Small ribosomal subunit protein uS5.